A 729-amino-acid chain; its full sequence is Transcriptional activator ptaB (729 aa).

Positions 1–12 (MPQHPGLPPGHP) are enriched in pro residues. Disordered stretches follow at residues 1–69 (MPQH…QAHA), 207–341 (AAAA…QNQA), 505–538 (LELS…SLPE), and 614–729 (RGPQ…KGTA). Residues 38-56 (PGGPQVTQGGPMMGMPPGA) show a composition bias toward low complexity. A compositionally biased stretch (pro residues) spans 272–285 (APQPHPTPNPPPQQ). Composition is skewed to low complexity over residues 286 to 300 (LPQA…HQQP) and 307 to 341 (QPQQ…QNQA). Residues 614–625 (RGPQMNGPNQFA) show a composition bias toward polar residues. Residues 655–671 (GPPGMVQQGQMQPNVGQ) show a composition bias toward low complexity. Residues 672-682 (ATSASASPQVT) show a composition bias toward polar residues.

The protein belongs to the MFG1 family. As to quaternary structure, interacts with somA.

The protein localises to the nucleus. Its function is as follows. Transcriptional regulator that forms a complex with somA to control biofilm formation. In Aspergillus fumigatus (strain ATCC MYA-4609 / CBS 101355 / FGSC A1100 / Af293) (Neosartorya fumigata), this protein is Transcriptional activator ptaB.